The chain runs to 379 residues: MTTTTAGKVNLLGLTQPQLEQFFESIGEKRFRAGQVMKWIHHFGVDDFDAMTNVGKALREKLKASAEIRGPEIVSQDISADGTRKWVVRVASGSCVETVYIPQGGRGTLCVSSQAGCALDCSFCSTGKQGFNSDLTAAEVIGQVWIANKSFGTVPAKIDRAITNVVMMGMGEPLLNFDNVVAAMNIMMDDLGYGISKRKVTLSTSGVVPMIDKLGEVIDVSLALSLHAPNDELRNKLVPINKKYPLGMLLDACRRYISRLGEKRVLTVEYTLLKDVNDQPEHAEQMIALLKDTPCKINLIPFNPFPHSGYERPSNNAIRRFQDMLHKGGFNVTVRTTRGDDIDAACGQLVGQVMDRTRRSERYIAVRQLAESESAANRN.

Glu-97 (proton acceptor) is an active-site residue. The 241-residue stretch at 103 to 343 (QGGRGTLCVS…VRTTRGDDID (241 aa)) folds into the Radical SAM core domain. An intrachain disulfide couples Cys-110 to Cys-346. [4Fe-4S] cluster-binding residues include Cys-117, Cys-121, and Cys-124. Residues 171 to 172 (GE), Ser-203, 225 to 227 (SLH), and Asn-303 contribute to the S-adenosyl-L-methionine site. The active-site S-methylcysteine intermediate is the Cys-346.

Belongs to the radical SAM superfamily. RlmN family. It depends on [4Fe-4S] cluster as a cofactor.

Its subcellular location is the cytoplasm. It carries out the reaction adenosine(2503) in 23S rRNA + 2 reduced [2Fe-2S]-[ferredoxin] + 2 S-adenosyl-L-methionine = 2-methyladenosine(2503) in 23S rRNA + 5'-deoxyadenosine + L-methionine + 2 oxidized [2Fe-2S]-[ferredoxin] + S-adenosyl-L-homocysteine. The enzyme catalyses adenosine(37) in tRNA + 2 reduced [2Fe-2S]-[ferredoxin] + 2 S-adenosyl-L-methionine = 2-methyladenosine(37) in tRNA + 5'-deoxyadenosine + L-methionine + 2 oxidized [2Fe-2S]-[ferredoxin] + S-adenosyl-L-homocysteine. Specifically methylates position 2 of adenine 2503 in 23S rRNA and position 2 of adenine 37 in tRNAs. m2A2503 modification seems to play a crucial role in the proofreading step occurring at the peptidyl transferase center and thus would serve to optimize ribosomal fidelity. This Pseudomonas aeruginosa (strain ATCC 15692 / DSM 22644 / CIP 104116 / JCM 14847 / LMG 12228 / 1C / PRS 101 / PAO1) protein is Dual-specificity RNA methyltransferase RlmN.